The chain runs to 568 residues: MSTAPSNNRLNRQQAESFLSSLSGHYYPNSSREFISGSNKDIQVPFRRIHLSETLHQPTPGVKLPPNEPVDVYDTSSVYGDPDATIDVKAGLKKVRENWIQERHSENQQYNHGITQLAYARRGVITPEMEFIALRENMGRGHLKNPITPEFVRDEVASGRAIIPVNTHHPESEPMIIGRNFLVKVNANIGNSSVSSSIEEEVEKLVWATRWGADTVMDLSTGRNIHQTREWILRNSPVPIGTVPIYQALERVNGVAEDLSWPVFKDVLLEQAEQGVDYFTIHAGVLHDFIKLTAKRVTGIVSRGGSIMAKWCMAHQQESFLYQHFRDICKICAKYDVSLSLGDGLRPGSIADANDEAQFAELRVLGELTQIAWEYDVQVMIEGPGHVPMHKIQENMDEQLKHCHGAPFYTLGPLTTDIAPGYDHITSCIGAAMIGAFGCAMLCYVTPKEHLGLPNKEDVKQGMIAYKIAAHAADLAKGHPGAQARDDAMSKARFEFRWEDQFNLALDPVTARSYHDETLPQDSNKTAQFCSMCGPKFCSMKISHEVRQYNPDTRIDVKVKDAATEGAE.

Substrate is bound by residues N188, M217, Y246, H282, 302 to 304, 343 to 346, and E382; these read SRG and DGLR. H386 contributes to the Zn(2+) binding site. A substrate-binding site is contributed by Y409. A Zn(2+)-binding site is contributed by H450. Residues C530, C533, and C538 each coordinate [4Fe-4S] cluster.

The protein belongs to the ThiC family. Homodimer. [4Fe-4S] cluster serves as cofactor.

The enzyme catalyses 5-amino-1-(5-phospho-beta-D-ribosyl)imidazole + S-adenosyl-L-methionine = 4-amino-2-methyl-5-(phosphooxymethyl)pyrimidine + CO + 5'-deoxyadenosine + formate + L-methionine + 3 H(+). It functions in the pathway cofactor biosynthesis; thiamine diphosphate biosynthesis. In terms of biological role, catalyzes the synthesis of the hydroxymethylpyrimidine phosphate (HMP-P) moiety of thiamine from aminoimidazole ribotide (AIR) in a radical S-adenosyl-L-methionine (SAM)-dependent reaction. This is Phosphomethylpyrimidine synthase from Idiomarina loihiensis (strain ATCC BAA-735 / DSM 15497 / L2-TR).